The sequence spans 504 residues: Cytochrome P450 2S1 (504 aa).

Cys440 is a binding site for heme.

This sequence belongs to the cytochrome P450 family. It depends on heme as a cofactor. As to expression, expressed at higher levels in extrahepatic tissues including trachea, lung, stomach, small intestine, colon, kidney, breast, placenta and spleen. Expressed in peripheral blood leukocytes. Constitutively expressed in skin (at protein level).

It is found in the endoplasmic reticulum membrane. The protein localises to the microsome membrane. It catalyses the reaction all-trans-retinoate + reduced [NADPH--hemoprotein reductase] + O2 = all-trans-5,6-epoxyretinoate + oxidized [NADPH--hemoprotein reductase] + H2O + H(+). It carries out the reaction all-trans-retinoate + reduced [NADPH--hemoprotein reductase] + O2 = all-trans-4-hydroxyretinoate + oxidized [NADPH--hemoprotein reductase] + H2O + H(+). The enzyme catalyses (5S)-hydroperoxy-(6E,8Z,11Z,14Z)-eicosatetraenoate = 5-oxo-(6E,8Z,11Z,14Z)-eicosatetraenoate + H2O. The catalysed reaction is (12S)-hydroperoxy-(5Z,8Z,10E,14Z)-eicosatetraenoate = 12-oxo-(5Z,8Z,10E,14Z)-eicosatetraenoate + H2O. It catalyses the reaction (15S)-hydroperoxy-(5Z,8Z,11Z,13E)-eicosatetraenoate = 15-oxo-(5Z,8Z,11Z,13E)-eicosatetraenoate + H2O. It carries out the reaction prostaglandin H2 = thromboxane A2. The enzyme catalyses prostaglandin H2 = (12S)-hydroxy-(5Z,8E,10E)-heptadecatrienoate + malonaldehyde. The catalysed reaction is (13S)-hydroperoxy-(9Z,11E)-octadecadienoate = 13-oxo-(9Z,11E)-octadecadienoate + H2O. Its pathway is lipid metabolism; fatty acid metabolism. In terms of biological role, a cytochrome P450 monooxygenase involved in the metabolism of retinoids and eicosanoids. In epidermis, may contribute to the oxidative metabolism of all-trans-retinoic acid. For this activity, uses molecular oxygen inserting one oxygen atom into a substrate, and reducing the second into a water molecule, with two electrons provided by NADPH via cytochrome P450 reductase (NADPH--hemoprotein reductase). Additionally, displays peroxidase and isomerase activities toward various oxygenated eicosanoids such as prostaglandin H2 (PGH2) and hydroperoxyeicosatetraenoates (HPETEs). Independently of cytochrome P450 reductase, NADPH, and O2, catalyzes the breakdown of PGH2 to hydroxyheptadecatrienoic acid (HHT) and malondialdehyde (MDA), which is known to act as a mediator of DNA damage. The sequence is that of Cytochrome P450 2S1 from Homo sapiens (Human).